A 250-amino-acid polypeptide reads, in one-letter code: Anamorsin homolog 2 (250 aa).

Positions 1-102 (MNLKITINQQ…QTKKINIPQQ (102 aa)) are N-terminal SAM-like domain. The segment at 102–149 (QDFNNCYGKYDYIEQKFQNQINFFKQVDLKGNQETIDENELLNDGVEV) is linker. 4 residues coordinate [2Fe-2S] cluster: Cys155, Cys162, Cys165, and Cys167. A fe-S binding site A region spans residues 155–167 (CASKPRACANCTC). Residues Cys193, Cys196, Cys204, and Cys207 each contribute to the [4Fe-4S] cluster site. 2 short sequence motifs (cx2C motif) span residues 193–196 (CGSC) and 204–207 (CANC). The fe-S binding site B stretch occupies residues 193-207 (CGSCYLGDAFRCANC).

Belongs to the anamorsin family. As to quaternary structure, monomer. The cofactor is [2Fe-2S] cluster. [4Fe-4S] cluster serves as cofactor.

It localises to the cytoplasm. The protein localises to the mitochondrion intermembrane space. Its function is as follows. Component of the cytosolic iron-sulfur (Fe-S) protein assembly (CIA) machinery. Required for the maturation of extramitochondrial Fe-S proteins. Part of an electron transfer chain functioning in an early step of cytosolic Fe-S biogenesis, facilitating the de novo assembly of a [4Fe-4S] cluster on the cytosolic Fe-S scaffold complex. Electrons are transferred from NADPH via a FAD- and FMN-containing diflavin oxidoreductase. Together with the diflavin oxidoreductase, also required for the assembly of the diferric tyrosyl radical cofactor of ribonucleotide reductase (RNR), probably by providing electrons for reduction during radical cofactor maturation in the catalytic small subunit. The polypeptide is Anamorsin homolog 2 (Paramecium tetraurelia).